Here is a 296-residue protein sequence, read N- to C-terminus: Ribosomal RNA small subunit methyltransferase H (296 aa).

Residues 41–43 (GGH), Asp60, Phe87, Asp103, and Gln110 contribute to the S-adenosyl-L-methionine site.

This sequence belongs to the methyltransferase superfamily. RsmH family.

Its subcellular location is the cytoplasm. It catalyses the reaction cytidine(1402) in 16S rRNA + S-adenosyl-L-methionine = N(4)-methylcytidine(1402) in 16S rRNA + S-adenosyl-L-homocysteine + H(+). Functionally, specifically methylates the N4 position of cytidine in position 1402 (C1402) of 16S rRNA. This chain is Ribosomal RNA small subunit methyltransferase H, found in Synechococcus elongatus (strain ATCC 33912 / PCC 7942 / FACHB-805) (Anacystis nidulans R2).